Reading from the N-terminus, the 602-residue chain is Sodium- and chloride-dependent GABA transporter 2 (602 aa).

The Cytoplasmic segment spans residues 1 to 40 (MENRASGTTSNGETKPVCPAMEKVEEDGTLEREHWNNKME). 3 helical membrane passes run 41–61 (FVLSVAGEIIGLGNVWRFPYL), 68–88 (GAFFIPYLIFLFTCGIPVFFL), and 121–141 (IVSLLNVYYIVVLAWALFYLF). The Extracellular portion of the chain corresponds to 142–206 (SSFTTDLPWG…GIQHLGSLRW (65 aa)). Cysteines 153 and 162 form a disulfide. Asn169, Asn173, and Asn178 each carry an N-linked (GlcNAc...) asparagine glycan. The next 2 membrane-spanning stretches (helical) occupy residues 207 to 227 (ELVLCLLLAWIICYFCIWKGV) and 233 to 253 (VVYFTATFPYLMLVVLLIRGV). Asn269 carries N-linked (GlcNAc...) asparagine glycosylation. 7 helical membrane-spanning segments follow: residues 282 to 302 (AGTQIFFSFAICLGCLTALGS), 319 to 339 (ILNSSTSFMAGFAIFSILGFM), 366 to 386 (VVMLPFSPLWACCFFFMVVLL), 418 to 438 (VLILIVSVISFFIGLIMLTEG), 453 to 473 (GMCLLFVAIFESLCVAWVYGA), 490 to 510 (PLIKYCWLFFTPAVCLATFLF), and 528 to 548 (WWGDALGWLLALSSMICIPAW). Residues 549 to 602 (SIYKLRTLKGPLRERLRQLVCPAEDLPQKNQPEPTAPATPMTSLLRLTELESNC) are Cytoplasmic-facing. Position 587 is a phosphothreonine (Thr587). A Phosphoserine modification is found at Ser591.

This sequence belongs to the sodium:neurotransmitter symporter (SNF) (TC 2.A.22) family. SLC6A13 subfamily. In terms of tissue distribution, expressed at high levels in liver, followed by kidney and leptomeninges, and very low levels in the cerebellum (at protein level). In the brain, detected in some blood vessels (at protein level). In the kidney, expressed in the cortex, including parts of the proximal tubules, but not in the medulla (at protein level). In the liver, highest expression in periportal hepatocytes, with highest density at the vascular side (at protein level). Also detected at low levels in other organs, including skeletal muscle.

The protein resides in the cell membrane. Its subcellular location is the basolateral cell membrane. The enzyme catalyses 4-aminobutanoate(out) + chloride(out) + 2 Na(+)(out) = 4-aminobutanoate(in) + chloride(in) + 2 Na(+)(in). It carries out the reaction taurine(out) + chloride(out) + 2 Na(+)(out) = taurine(in) + chloride(in) + 2 Na(+)(in). The catalysed reaction is beta-alanine(out) + chloride(out) + 2 Na(+)(out) = beta-alanine(in) + chloride(in) + 2 Na(+)(in). It catalyses the reaction hypotaurine(out) + chloride(out) + 2 Na(+)(out) = hypotaurine(in) + chloride(in) + 2 Na(+)(in). With respect to regulation, gamma-aminobutyric acid (GABA) transport is inhibited by beta-alanine, taurine, hypotaurine, beta-guanidinopropionic acid, 2,3-diaminopropionic acid, guvacine and nipecotic acid. Beta-alanine transport is inhibited by GABA. Taurine transport is inhibited by GABA, beta-alanine, SNAP-5114, nigericin, nipecotic acid and ouabain. In terms of biological role, mediates sodium- and chloride-dependent transport of gamma-aminobutyric acid (GABA). Can also mediate transport of beta-alanine, taurine and hypotaurine and is the major taurine transporter in hepatocytes. This is Sodium- and chloride-dependent GABA transporter 2 (Slc6a13) from Mus musculus (Mouse).